The primary structure comprises 395 residues: Tyrosine--tRNA ligase (395 aa).

The short motif at 42 to 51 (PTAPDIHLGH) is the 'HIGH' region element. The 'KMSKS' region signature appears at 226–230 (KMSKS). K229 is a binding site for ATP. The 61-residue stretch at 334-394 (IAISNLLKDA…GKRKFARITL (61 aa)) folds into the S4 RNA-binding domain.

Belongs to the class-I aminoacyl-tRNA synthetase family. TyrS type 2 subfamily. As to quaternary structure, homodimer.

The protein resides in the cytoplasm. It catalyses the reaction tRNA(Tyr) + L-tyrosine + ATP = L-tyrosyl-tRNA(Tyr) + AMP + diphosphate + H(+). Its function is as follows. Catalyzes the attachment of tyrosine to tRNA(Tyr) in a two-step reaction: tyrosine is first activated by ATP to form Tyr-AMP and then transferred to the acceptor end of tRNA(Tyr). This Photobacterium profundum (strain SS9) protein is Tyrosine--tRNA ligase.